The chain runs to 469 residues: 2-amino-4-ketopentanoate thiolase beta subunit (469 aa).

Lys102 bears the N6-(pyridoxal phosphate)lysine mark. Pyridoxal 5'-phosphate-binding positions include Asn128 and 238–242; that span reads AGGGN.

The protein belongs to the threonine synthase family. Heterodimer with OrtA. Pyridoxal 5'-phosphate is required as a cofactor.

The enzyme catalyses D-alanine + acetyl-CoA = (2R)-2-amino-4-oxopentanoate + CoA. Completely inhibited by p-chloromercuribenzoate (p-ClHgBzO) and acetyl-CoA, and partially inhibited by N-ethylmaleimide. Functionally, involved in the ornithine fermentation pathway. Catalyzes the thiolytic cleavage of 2-amino-4-ketopentanoate (AKP) with coenzyme A (CoA) to form acetyl-CoA and alanine. It is strictly specific for AKP. This chain is 2-amino-4-ketopentanoate thiolase beta subunit, found in Acetoanaerobium sticklandii (strain ATCC 12662 / DSM 519 / JCM 1433 / CCUG 9281 / NCIMB 10654 / HF) (Clostridium sticklandii).